The primary structure comprises 141 residues: ATP synthase F(0) complex subunit C3, mitochondrial (141 aa).

The transit peptide at Met1–Arg66 directs the protein to the mitochondrion. Residues Val82–Tyr102 traverse the membrane as a helical segment. N6,N6,N6-trimethyllysine is present on Lys109. A helical membrane pass occupies residues Ile117 to Ile137.

This sequence belongs to the ATPase C chain family. F-type ATPases have 2 components, CF(1) - the catalytic core - and CF(0) - the membrane proton channel. CF(1) has five subunits: alpha(3), beta(3), gamma(1), delta(1), epsilon(1). CF(0) has three main subunits: a, b and c. Interacts with TMEM70 and TMEM242. Post-translationally, trimethylated by ATPSCKMT at Lys-109. Methylation is required for proper incorporation of the C subunit into the ATP synthase complex and mitochondrial respiration.

The protein localises to the mitochondrion membrane. Mitochondrial membrane ATP synthase (F(1)F(0) ATP synthase or Complex V) produces ATP from ADP in the presence of a proton gradient across the membrane which is generated by electron transport complexes of the respiratory chain. F-type ATPases consist of two structural domains, F(1) - containing the extramembraneous catalytic core and F(0) - containing the membrane proton channel, linked together by a central stalk and a peripheral stalk. During catalysis, ATP synthesis in the catalytic domain of F(1) is coupled via a rotary mechanism of the central stalk subunits to proton translocation. Part of the complex F(0) domain. A homomeric c-ring of probably 10 subunits is part of the complex rotary element. The sequence is that of ATP synthase F(0) complex subunit C3, mitochondrial from Bos taurus (Bovine).